Here is a 595-residue protein sequence, read N- to C-terminus: Aspartate--tRNA(Asp/Asn) ligase (595 aa).

Position 175 (glutamate 175) interacts with L-aspartate. Residues 199–202 are aspartate; that stretch reads QQYK. Arginine 221 and histidine 454 together coordinate L-aspartate. Residue 221–223 participates in ATP binding; that stretch reads RDE. Residue glutamate 488 participates in ATP binding. L-aspartate is bound at residue arginine 495. 540 to 543 is an ATP binding site; the sequence is GIDR.

Belongs to the class-II aminoacyl-tRNA synthetase family. Type 1 subfamily. Homodimer.

The protein resides in the cytoplasm. It carries out the reaction tRNA(Asx) + L-aspartate + ATP = L-aspartyl-tRNA(Asx) + AMP + diphosphate. In terms of biological role, aspartyl-tRNA synthetase with relaxed tRNA specificity since it is able to aspartylate not only its cognate tRNA(Asp) but also tRNA(Asn). Reaction proceeds in two steps: L-aspartate is first activated by ATP to form Asp-AMP and then transferred to the acceptor end of tRNA(Asp/Asn). The protein is Aspartate--tRNA(Asp/Asn) ligase of Agrobacterium fabrum (strain C58 / ATCC 33970) (Agrobacterium tumefaciens (strain C58)).